We begin with the raw amino-acid sequence, 62 residues long: UPF0434 protein R03186 (62 aa).

It belongs to the UPF0434 family.

The polypeptide is UPF0434 protein R03186 (Rhizobium meliloti (strain 1021) (Ensifer meliloti)).